The following is a 132-amino-acid chain: NADPH-dependent 7-cyano-7-deazaguanine reductase (132 aa).

The active-site Thioimide intermediate is the cysteine 48. The Proton donor role is filled by aspartate 55. Substrate is bound by residues 70–72 (LEL) and 89–90 (ME).

The protein belongs to the GTP cyclohydrolase I family. QueF type 1 subfamily.

Its subcellular location is the cytoplasm. The catalysed reaction is 7-aminomethyl-7-carbaguanine + 2 NADP(+) = 7-cyano-7-deazaguanine + 2 NADPH + 3 H(+). Its pathway is tRNA modification; tRNA-queuosine biosynthesis. Catalyzes the NADPH-dependent reduction of 7-cyano-7-deazaguanine (preQ0) to 7-aminomethyl-7-deazaguanine (preQ1). The chain is NADPH-dependent 7-cyano-7-deazaguanine reductase from Elusimicrobium minutum (strain Pei191).